We begin with the raw amino-acid sequence, 365 residues long: Cyclin-O protein B (365 aa).

Residues S22 to K64 form a disordered region. The segment covering T53–K64 has biased composition (basic residues).

Belongs to the cyclin family.

It localises to the cytoplasm. Functionally, specifically required for generation of multiciliated cells, possibly by promoting a cell cycle state compatible with centriole amplification and maturation. Acts downstream of mcidas to promote mother centriole amplification and maturation in preparation for apical docking. This chain is Cyclin-O protein B (ccno-b), found in Xenopus laevis (African clawed frog).